Consider the following 757-residue polypeptide: Tyrosine-protein kinase HTK16 (757 aa).

In terms of domain architecture, SH2 1 spans 10–102; it reads WYHGKITREV…GLPCKLVDFC (93 aa). 5 ANK repeats span residues 115–147, 151–180, 184–214, 219–248, and 252–281; these read GLDTRLHLACEEKNPNTVKELLQDSVIKENVNA, SGLTALHISCSNGDNDIVAMLLNAGADASA, NGRTPVQVVCFYNHASTLHLLISKGSADFLK, NGWVPLHEAAMRGSLECVKVLLSFNASMYP, and DGDTPRDLALQYENYNVVEFFDNYPVNQPK. An SH2 2 domain is found at 287–379; it reads WLHQNLDRNG…GLPTLLQFPV (93 aa). Disordered regions lie at residues 381–407 and 444–467; these read SAENRKRPLPPTPTKNQLKLPVPPSRP and PKLPRPVVNHTEVPNSVNVGQKGD. Residues 455–467 are compositionally biased toward polar residues; it reads EVPNSVNVGQKGD. A Protein kinase domain is found at 484-740; sequence ISFGKELGVG…PTFNELHSTF (257 aa). Residues 490–498 and lysine 516 each bind ATP; that span reads LGVGEFGSV. The active-site Proton acceptor is aspartate 608. A Phosphotyrosine modification is found at tyrosine 746.

This sequence belongs to the protein kinase superfamily. Tyr protein kinase family. In terms of tissue distribution, epithelial cells.

It carries out the reaction L-tyrosyl-[protein] + ATP = O-phospho-L-tyrosyl-[protein] + ADP + H(+). In terms of biological role, may be involved in signal transduction. The chain is Tyrosine-protein kinase HTK16 (HTK16) from Hydra vulgaris (Hydra).